A 90-amino-acid polypeptide reads, in one-letter code: UPF0297 protein BH1268 (90 aa).

This sequence belongs to the UPF0297 family.

The sequence is that of UPF0297 protein BH1268 from Halalkalibacterium halodurans (strain ATCC BAA-125 / DSM 18197 / FERM 7344 / JCM 9153 / C-125) (Bacillus halodurans).